The chain runs to 424 residues: Probable serine/threonine-protein kinase PBL15 (424 aa).

Residues 99 to 380 (FSGNYLLGEG…AVVEALESLI (282 aa)) enclose the Protein kinase domain. ATP is bound by residues 105-113 (LGEGGFGKV) and Lys-134. Tyr-179 is subject to Phosphotyrosine. Asp-229 serves as the catalytic Proton acceptor. A Phosphoserine modification is found at Ser-233. Phosphothreonine is present on residues Thr-264 and Thr-269. Position 277 is a phosphotyrosine (Tyr-277). Positions 390 to 424 (GHWPLSPKSQGGKVSPKVRGDHRSGRKSAPGSLRS) are disordered.

Belongs to the protein kinase superfamily. Ser/Thr protein kinase family. As to quaternary structure, interacts with the Xanthomonas campestris effector XopAC/AvrAC.

The protein resides in the cell membrane. The enzyme catalyses L-seryl-[protein] + ATP = O-phospho-L-seryl-[protein] + ADP + H(+). It catalyses the reaction L-threonyl-[protein] + ATP = O-phospho-L-threonyl-[protein] + ADP + H(+). Functionally, may be involved in plant defense signaling. The protein is Probable serine/threonine-protein kinase PBL15 of Arabidopsis thaliana (Mouse-ear cress).